Consider the following 235-residue polypeptide: MLKLIDITWLYHHLPMRFTLAVERGEQVAILGPSGAGKSTLLNLIAGFLAPASGTLLIAGEDHTLTPPSRRPVSMLFQENNLFSHLNVQQNIGLGLNPGLTLNASQREKRDAIARQMGIESLMTRLPGELSGGQRQRVALARCLVREQPVLLLDEPFSALDPTLRQEMLTLVSDICRERQLTLLMVSHSVEDAARIAPRSIVVADGRIAWQGKTDELLSGQASASALLGIKSHIL.

Residues 2–230 (LKLIDITWLY…QASASALLGI (229 aa)) enclose the ABC transporter domain. Residue 32–39 (GPSGAGKS) coordinates ATP.

It belongs to the ABC transporter superfamily. Thiamine importer (TC 3.A.1.19.1) family. As to quaternary structure, the complex is composed of two ATP-binding proteins (ThiQ), two transmembrane proteins (ThiP) and a solute-binding protein (ThiB).

Its subcellular location is the cell inner membrane. The enzyme catalyses thiamine(out) + ATP + H2O = thiamine(in) + ADP + phosphate + H(+). Part of the ABC transporter complex ThiBPQ involved in thiamine import. Responsible for energy coupling to the transport system. The protein is Thiamine import ATP-binding protein ThiQ of Salmonella choleraesuis (strain SC-B67).